A 507-amino-acid chain; its full sequence is Cytochrome P450 4X1 (507 aa).

Residues 14–34 traverse the membrane as a helical segment; sequence LHLALVFCLALVLMQAVKLYL. Heme is bound at residue C452.

Belongs to the cytochrome P450 family. Heme serves as cofactor. As to expression, expressed at high levels in brain, mainly in neurons in different regions, including brain stem, hippocampus, cortex and cerebellum. Also expressed in cerebral vasculature. Not detected in kidney, nor liver.

The protein localises to the endoplasmic reticulum membrane. Its subcellular location is the microsome membrane. The enzyme catalyses N-(5Z,8Z,11Z,14Z-eicosatetraenoyl)-ethanolamine + reduced [NADPH--hemoprotein reductase] + O2 = N-(14,15-epoxy-5Z,8Z,11Z-eicosatrienoyl)-ethanolamine + oxidized [NADPH--hemoprotein reductase] + H2O + H(+). Functionally, a cytochrome P450 monooxygenase that selectively catalyzes the epoxidation of the last double bond of the arachidonoyl moiety of anandamide, potentially modulating endocannabinoid signaling. Has no hydroxylase activity toward various fatty acids, steroids and prostaglandins. Mechanistically, uses molecular oxygen inserting one oxygen atom into a substrate, and reducing the second into a water molecule, with two electrons provided by NADPH via cytochrome P450 reductase (CPR; NADPH-ferrihemoprotein reductase). The polypeptide is Cytochrome P450 4X1 (Rattus norvegicus (Rat)).